A 278-amino-acid polypeptide reads, in one-letter code: Potassium/proton antiporter CemA (278 aa).

Helical transmembrane passes span 61-81 (LIVL…FIIG), 155-175 (AIKN…LIVL), 203-223 (IILF…EVVI), and 238-258 (FIFL…KYWI).

This sequence belongs to the CemA family.

It is found in the plastid. The protein resides in the chloroplast inner membrane. The catalysed reaction is K(+)(in) + H(+)(out) = K(+)(out) + H(+)(in). Contributes to K(+)/H(+) antiport activity by supporting proton efflux to control proton extrusion and homeostasis in chloroplasts in a light-dependent manner to modulate photosynthesis. Prevents excessive induction of non-photochemical quenching (NPQ) under continuous-light conditions. Indirectly promotes efficient inorganic carbon uptake into chloroplasts. The sequence is that of Potassium/proton antiporter CemA from Cyanidium caldarium (Red alga).